The following is a 2224-amino-acid chain: Coagulation factor V (2224 aa).

Positions 1 to 28 are cleaved as a signal peptide; the sequence is MFPGCPRLWVLVVLGTSWVGWGSQGTEA. Plastocyanin-like domains follow at residues 30–193, 203–329, 348–526, and 536–684; these read QLRQ…LLIC, TQKT…IKNC, KRWE…LLIC, and IQRA…DVKC. 2 consecutive F5/8 type A domains span residues 30-329 and 348-684; these read QLRQ…IKNC and KRWE…DVKC. Residues asparagine 51 and asparagine 55 are each glycosylated (N-linked (GlcNAc...) asparagine). Ca(2+) is bound by residues aspartate 139 and aspartate 140. Cysteine 167 and cysteine 193 are disulfide-bonded. Asparagine 239, asparagine 297, asparagine 382, asparagine 460, and asparagine 468 each carry an N-linked (GlcNAc...) asparagine glycan. An intrachain disulfide couples cysteine 248 to cysteine 329. Cysteine 500 and cysteine 526 are oxidised to a cystine. Asparagine 554 carries N-linked (GlcNAc...) asparagine glycosylation. A disulfide bond links cysteine 603 and cysteine 684. A Phosphothreonine modification is found at threonine 640. A b region spans residues 692–1573; sequence SYEIFEPPES…PDNIAAWYLR (882 aa). Sulfotyrosine occurs at positions 693, 724, and 726. The propeptide at 738-1573 is activation peptide (connecting region); it reads SFRNSSLNQE…PDNIAAWYLR (836 aa). N-linked (GlcNAc...) asparagine glycans are attached at residues asparagine 741, asparagine 752, asparagine 760, asparagine 776, and asparagine 782. Threonine 805 carries an O-linked (GalNAc...) threonine glycan. An N-linked (GlcNAc...) asparagine glycan is attached at asparagine 821. Residues 822–831 show a composition bias toward polar residues; it reads SSTAEHSSPY. The interval 822 to 842 is disordered; it reads SSTAEHSSPYSEDPIEDPLQP. Serine 859 is subject to Phosphoserine; by FAM20C. The tract at residues 894 to 927 is disordered; it reads LSQDTGSPSGMRPWEDLPSQDTGSPSRMRPWKDP. Tandem repeats lie at residues 895 to 911 and 912 to 928. Residues 895–928 form a 2 X 17 AA tandem repeats region; that stretch reads SQDTGSPSGMRPWEDLPSQDTGSPSRMRPWKDPP. N-linked (GlcNAc...) asparagine glycosylation is found at asparagine 938 and asparagine 977. 2 disordered regions span residues 982–1001 and 1029–1048; these read WGESTPLANKPGKQSGHPKF and TRKKKKEKHTHHAPLSPRTF. Residues 1029–1040 are compositionally biased toward basic residues; the sequence is TRKKKKEKHTHH. Residues asparagine 1074, asparagine 1083, asparagine 1103, and asparagine 1106 are each glycosylated (N-linked (GlcNAc...) asparagine). Residues 1097-1157 are disordered; the sequence is LPDHNQNSSN…SSSPELSEML (61 aa). Over residues 1099–1111 the composition is skewed to polar residues; sequence DHNQNSSNDTGQA. The span at 1139–1154 shows a compositional bias: low complexity; sequence HSTSDPSHRSSSPELS. Repeat copies occupy residues 1185–1193, 1194–1202, 1203–1211, 1212–1220, 1221–1229, 1230–1238, 1239–1247, 1248–1256, 1257–1265, 1266–1274, 1275–1283, 1284–1292, 1293–1301, 1302–1310, 1311–1319, 1320–1328, 1329–1337, 1338–1346, 1347–1355, 1356–1364, 1365–1373, 1374–1382, 1383–1391, 1392–1400, 1401–1409, 1410–1418, 1419–1427, 1428–1436, 1437–1445, 1446–1454, 1455–1463, 1464–1472, 1473–1481, 1482–1490, and 1493–1501. Residues 1185–1501 form a 35 X 9 AA approximate tandem repeats of [TNP]-L-S-P-D-L-S-Q-T region; sequence VISPDLSQVT…SPSSPTLNDT (317 aa). Positions 1341-1367 are disordered; sequence PELSQTNLSPALGQMPLSPDPSHTTLS. N-linked (GlcNAc...) asparagine glycosylation occurs at asparagine 1479. Asparagine 1499 carries N-linked (GlcNAc...) asparagine glycosylation. Sulfotyrosine is present on residues tyrosine 1522, tyrosine 1538, and tyrosine 1543. A glycan (N-linked (GlcNAc...) asparagine) is linked at asparagine 1559. 2 consecutive Plastocyanin-like domains span residues 1578–1751 and 1761–1907; these read NRRN…LLIC and NMPM…DRDC. The region spanning 1578 to 1907 is the F5/8 type A 3 domain; it reads NRRNYYIAAE…TPFLIMDRDC (330 aa). Tyrosine 1593 is modified (sulfotyrosine). N-linked (GlcNAc...) asparagine glycosylation occurs at asparagine 1703. Cysteine 1725 and cysteine 1751 are disulfide-bonded. Cu cation contacts are provided by histidine 1843 and histidine 1845. 2 cysteine pairs are disulfide-bonded: cysteine 1907–cysteine 2061 and cysteine 2066–cysteine 2221. F5/8 type C domains lie at 1907–2061 and 2066–2221; these read CRMP…LQGC and CSTP…LFGC. N-linked (GlcNAc...) asparagine glycosylation is found at asparagine 2010 and asparagine 2209.

The protein belongs to the multicopper oxidase family. Factor Va, the activated form of factor V, is composed of a heavy chain and a light chain, non-covalently bound. The interaction between the two chains is calcium-dependent. Forms heterodimer with SERPINA5. Post-translationally, thrombin activates factor V proteolytically to the active cofactor, factor Va (formation of a heavy chain at the N-terminus and a light chain at the C-terminus). Sulfation is required for efficient thrombin cleavage and activation and for full procoagulant activity. In terms of processing, activated protein C inactivates factor V and factor Va by proteolytic degradation. Post-translationally, phosphorylated by FAM20C in the extracellular medium. In terms of tissue distribution, plasma.

It is found in the secreted. Its activity is regulated as follows. Inhibited by SERPINA5. Central regulator of hemostasis. It serves as a critical cofactor for the prothrombinase activity of factor Xa that results in the activation of prothrombin to thrombin. The sequence is that of Coagulation factor V (F5) from Homo sapiens (Human).